Reading from the N-terminus, the 531-residue chain is Jacalin-related lectin 16 (531 aa).

Jacalin-type lectin domains are found at residues 1-87 (MDRS…YFTW), 90-232 (PTKM…YFTT), 235-378 (LISL…YFRP), and 385-528 (TEKV…NVLP).

It belongs to the jacalin lectin family.

The chain is Jacalin-related lectin 16 (JAL16) from Arabidopsis thaliana (Mouse-ear cress).